The following is a 651-amino-acid chain: p-hydroxybenzoic acid efflux pump subunit AaeB (651 aa).

The next 11 membrane-spanning stretches (helical) occupy residues 11–31, 41–61, 65–85, 91–111, 117–137, 150–170, 367–387, 404–424, 428–448, 454–474, and 480–500; these read FACK…WFEM, AAIV…SGAI, GLLR…IIMT, VVML…SSLV, YVFA…QSSP, EIIL…PRSV, LFWL…LGVV, FLIG…LVLP, QSLL…GIEI, GSLG…PMTF, and LDNA…IMLI.

The protein belongs to the aromatic acid exporter ArAE (TC 2.A.85) family.

It is found in the cell inner membrane. In terms of biological role, forms an efflux pump with AaeA. Could function as a metabolic relief valve, allowing to eliminate certain compounds when they accumulate to high levels in the cell. This chain is p-hydroxybenzoic acid efflux pump subunit AaeB, found in Musicola paradisiaca (strain Ech703) (Dickeya paradisiaca).